The chain runs to 505 residues: Trans-cinnamate 4-monooxygenase (505 aa).

A helical membrane pass occupies residues 3-23 (LLLLEKTLLGLFAAIIVASIV). Residues 213–218 (RSRLAQ) and Ala-306 each bind (E)-cinnamate. Cys-447 is a heme binding site.

The protein belongs to the cytochrome P450 family. The cofactor is heme.

The protein resides in the membrane. The catalysed reaction is (E)-cinnamate + reduced [NADPH--hemoprotein reductase] + O2 = (E)-4-coumarate + oxidized [NADPH--hemoprotein reductase] + H2O + H(+). It functions in the pathway phenylpropanoid metabolism; trans-4-coumarate biosynthesis; trans-4-coumarate from trans-cinnamate: step 1/1. In terms of biological role, catalyzes the first oxidative step of the phenylpropanoid pathway in higher plants by transforming trans-cinnamate into p-coumarate. The compounds formed by this pathway are essential components for lignification, pollination, and defense against ultraviolet light, predators and pathogens. This chain is Trans-cinnamate 4-monooxygenase (CYP73A4), found in Catharanthus roseus (Madagascar periwinkle).